The primary structure comprises 508 residues: MSNCLKHPWLENGLLNLIKNADVLPIRVFKCQPLQIFEYIRYEHPIRCKLSDTEFYIEAEFSSQSISDLNNFTEKRITSLRGGIVTLGNFLIHLIPSQSGIIPWIQVESFNFQGCEGAVFGNPKAITTSALFNALLQSPYLAALANEFNRSIKEGSSYQEASLSQQEKPNDNTSNSRDIKNNIQFHWKNMTSLSIEECIIPKGQQLILEKESEENTTHGIYLEERKMAQGLHNSVSETPEVKQEDNDEDLDAYSWSSSTDSAGEIPSLPTNRKILEKIAEKPPPFESPLEDDETPDQTNEHEANQVNVSQLPLNPRGSGISGRPVESTEQLNSSLTIERSQSIQSTDSKQRVETQSHRRSKIEIFDAQDELFDRSICTTIDDSTGKLLNAEETPIKTGDLHSTSASSVISCTPPAINFTSDICNEQIELEYKRKPIPDYDFMKGLETTLQELYVEHQSKKRRLELFQLTNNHQKNSEACEMCRLGLPHGSFFELLRDWKKIEEFRNKS.

The pot1-binding stretch occupies residues 2-223 (SNCLKHPWLE…ENTTHGIYLE (222 aa)). 3 disordered regions span residues 159–178 (QEAS…NSRD), 235–269 (VSET…PSLP), and 282–358 (PPPF…QSHR). Residues 327–347 (STEQLNSSLTIERSQSIQSTD) show a composition bias toward polar residues. Positions 348-358 (SKQRVETQSHR) are enriched in basic and acidic residues. Residues 379–508 (TIDDSTGKLL…KKIEEFRNKS (130 aa)) form a ccq1/poz1-binding region.

As to quaternary structure, interacts with ccq1, pot1 and poz1.

It is found in the chromosome. The protein localises to the telomere. Its subcellular location is the nucleus. Telomeric DNA-binding protein that is required to protect the 3'-end telomeric overhang and involved in telomere length regulation. recruits poz1 and ccq1 to telomeres, regulating telomere length negatively and positively respectively. The chain is Protection of telomeres protein tpz1 (tpz1) from Schizosaccharomyces pombe (strain 972 / ATCC 24843) (Fission yeast).